We begin with the raw amino-acid sequence, 162 residues long: MRAPIPEPKPGDLIEIFRPFYRHWAIYVGDGYVVHLAPPSEVAGAGAASVMSALTDKAIVKKELLYDVAGSDKYQVNNKHDDKYSPLPCSKIIQRAEELVGQEVLYKLTSENCEHFVNELRYGVARSDQVRDVIIAASAAGMGLAAMSLIGVMFSRNKRQKQ.

Over 1-133 (MRAPIPEPKP…VARSDQVRDV (133 aa)) the chain is Cytoplasmic. Residues 13–129 (LIEIFRPFYR…LRYGVARSDQ (117 aa)) enclose the LRAT domain. Catalysis depends on residues histidine 23 and histidine 35. Cysteine 113 functions as the Acyl-thioester intermediate in the catalytic mechanism. Residues 134–154 (IIAASAAGMGLAAMSLIGVMF) traverse the membrane as a helical segment. Over 155 to 162 (SRNKRQKQ) the chain is Lumenal.

This sequence belongs to the H-rev107 family. As to quaternary structure, interacts with PPP2R1A; this interaction might decrease PP2A activity.

The protein resides in the cell membrane. It is found in the cytoplasm. It localises to the cytosol. The protein localises to the perinuclear region. Its subcellular location is the peroxisome membrane. The protein resides in the mitochondrion membrane. It is found in the nucleus envelope. It localises to the lysosome membrane. The protein localises to the endoplasmic reticulum membrane. It catalyses the reaction a 1,2-diacyl-sn-glycero-3-phosphocholine + H2O = a 1-acyl-sn-glycero-3-phosphocholine + a fatty acid + H(+). The enzyme catalyses a 1,2-diacyl-sn-glycero-3-phosphocholine + H2O = a 2-acyl-sn-glycero-3-phosphocholine + a fatty acid + H(+). The catalysed reaction is 1,2-dihexadecanoyl-sn-glycero-3-phosphocholine + H2O = 1-hexadecanoyl-sn-glycero-3-phosphocholine + hexadecanoate + H(+). It carries out the reaction 1,2-dihexadecanoyl-sn-glycero-3-phosphocholine + H2O = 2-hexadecanoyl-sn-glycero-3-phosphocholine + hexadecanoate + H(+). It catalyses the reaction 1-hexadecanoyl-2-(9Z-octadecenoyl)-sn-glycero-3-phosphocholine + H2O = 2-(9Z-octadecenoyl)-sn-glycero-3-phosphocholine + hexadecanoate + H(+). The enzyme catalyses 1-hexadecanoyl-2-(9Z-octadecenoyl)-sn-glycero-3-phosphocholine + H2O = 1-hexadecanoyl-sn-glycero-3-phosphocholine + (9Z)-octadecenoate + H(+). The catalysed reaction is 1-hexadecanoyl-2-(5Z,8Z,11Z,14Z-eicosatetraenoyl)-sn-glycero-3-phosphocholine + H2O = 1-hexadecanoyl-sn-glycero-3-phosphocholine + (5Z,8Z,11Z,14Z)-eicosatetraenoate + H(+). It carries out the reaction 1-hexadecanoyl-2-(5Z,8Z,11Z,14Z-eicosatetraenoyl)-sn-glycero-3-phosphocholine + H2O = 2-(5Z,8Z,11Z,14Z)-eicosatetraenoyl-sn-glycero-3-phosphocholine + hexadecanoate + H(+). It catalyses the reaction 1-hexadecanoyl-2-(9Z,12Z-octadecadienoyl)-sn-glycero-3-phosphoethanolamine + H2O = 1-hexadecanoyl-sn-glycero-3-phosphoethanolamine + (9Z,12Z)-octadecadienoate + H(+). The enzyme catalyses 1-hexadecanoyl-2-(9Z,12Z-octadecadienoyl)-sn-glycero-3-phosphoethanolamine + H2O = 2-(9Z,12Z)-octadecadienoyl-sn-glycero-3-phosphoethanolamine + hexadecanoate + H(+). The catalysed reaction is 1-hexadecanoyl-2-(5Z,8Z,11Z,14Z-eicosatetraenoyl)-sn-glycero-3-phosphoethanolamine + H2O = 1-hexadecanoyl-sn-glycero-3-phosphoethanolamine + (5Z,8Z,11Z,14Z)-eicosatetraenoate + H(+). It carries out the reaction 1-hexadecanoyl-2-(5Z,8Z,11Z,14Z-eicosatetraenoyl)-sn-glycero-3-phosphoethanolamine + H2O = 2-(5Z,8Z,11Z,14Z)-eicosatetraenoyl-sn-glycero-3-phosphoethanolamine + hexadecanoate + H(+). It catalyses the reaction 1-hexanoyl-2-acyl-sn-glycero-3-phosphocholine + H2O = hexanoate + a 2-acyl-sn-glycero-3-phosphocholine + H(+). The enzyme catalyses 1-hexanoyl-2-acyl-sn-glycero-3-phosphocholine + H2O = 1-hexanoyl-sn-glycero-3-phosphocholine + a fatty acid + H(+). The catalysed reaction is 1,2-diheptadecanoyl-sn-glycero-3-phosphoethanolamine + 1-(9Z-octadecenoyl)-2-hexadecanoyl-sn-glycero-3-phosphocholine = 1,2-diheptadecanoyl-sn-glycero-3-phospho-N-hexadecanoyl-ethanolamine + 1-(9Z-octadecenoyl)-sn-glycero-3-phosphocholine + H(+). It carries out the reaction 1,2-diheptadecanoyl-sn-glycero-3-phosphoethanolamine + 1-(9Z-octadecenoyl)-2-hexadecanoyl-sn-glycero-3-phosphocholine = 1,2-diheptadecanoyl-sn-glycero-3-phospho-N-(9Z-octadecenoyl)-ethanolamine + 2-hexadecanoyl-sn-glycero-3-phosphocholine + H(+). It catalyses the reaction 1,2-dihexanoyl-sn-glycero-3-phosphoethanolamine + 2-heptanoyl-sn-glycero-3-phosphocholine = hexanoyl-sn-glycero-3-phosphoethanolamine + 1-hexanoyl-2-heptanoyl-sn-glycero-3-phosphocholine. The enzyme catalyses 1-hexadecanoyl-2-octadecanoyl-sn-glycero-3-phosphocholine + H2O = octadecanoate + 1-hexadecanoyl-sn-glycero-3-phosphocholine + H(+). The catalysed reaction is 1-hexadecanoyl-2-octadecanoyl-sn-glycero-3-phosphocholine + H2O = 2-octadecanoyl-sn-glycero-3-phosphocholine + hexadecanoate + H(+). It carries out the reaction 1-octadecanoyl-2-hexadecanoyl-sn-glycero-3-phosphocholine + H2O = 1-octadecanoyl-sn-glycero-3-phosphocholine + hexadecanoate + H(+). It catalyses the reaction 1-octadecanoyl-2-hexadecanoyl-sn-glycero-3-phosphocholine + H2O = 2-hexadecanoyl-sn-glycero-3-phosphocholine + octadecanoate + H(+). The enzyme catalyses 1-hexadecanoyl-2-(9Z,12Z-octadecadienoyl)-sn-glycero-3-phosphocholine + H2O = (9Z,12Z)-octadecadienoate + 1-hexadecanoyl-sn-glycero-3-phosphocholine + H(+). The catalysed reaction is 1-hexadecanoyl-2-(9Z,12Z-octadecadienoyl)-sn-glycero-3-phosphocholine + H2O = 2-(9Z,12Z-octadecadienoyl)-sn-glycero-3-phosphocholine + hexadecanoate + H(+). It carries out the reaction 1,2-di-(9Z-octadecenoyl)-sn-glycero-3-phosphocholine + H2O = 2-(9Z-octadecenoyl)-sn-glycero-3-phosphocholine + (9Z)-octadecenoate + H(+). It catalyses the reaction 1,2-dihexadecanoyl-sn-glycero-3-phosphocholine + H2O = hexadecanoyl-sn-glycero-3-phosphocholine + hexadecanoate + H(+). The enzyme catalyses 1,2-di-(9Z-octadecenoyl)-sn-glycero-3-phosphocholine + H2O = 1-(9Z-octadecenoyl)-sn-glycero-3-phosphocholine + (9Z)-octadecenoate + H(+). The catalysed reaction is 1,2-di-(9Z-octadecenoyl)-sn-glycero-3-phosphoethanolamine + 1,2-dihexadecanoyl-sn-glycero-3-phosphocholine = hexadecanoyl-sn-glycero-3-phosphocholine + N-hexadecanoyl-1,2-di-(9Z-octadecenoyl)-sn-glycero-3-phosphoethanolamine + H(+). It carries out the reaction 1,2-di-(9Z,12Z-octadecadienoyl)-sn-glycero-3-phosphocholine + H2O = 1-(9Z,12Z)-octadecadienoyl-sn-glycero-3-phosphocholine + (9Z,12Z)-octadecadienoate + H(+). In terms of biological role, exhibits both phospholipase A1/2 and acyltransferase activities. Shows phospholipase A1 (PLA1) and A2 (PLA2), catalyzing the calcium-independent release of fatty acids from the sn-1 or sn-2 position of glycerophospholipids. For most substrates, PLA1 activity is much higher than PLA2 activity. Shows O-acyltransferase activity, catalyzing the transfer of a fatty acyl group from glycerophospholipid to the hydroxyl group of lysophospholipid. Shows N-acyltransferase activity, catalyzing the calcium-independent transfer of a fatty acyl group at the sn-1 position of phosphatidylcholine (PC) and other glycerophospholipids to the primary amine of phosphatidylethanolamine (PE), forming N-acylphosphatidylethanolamine (NAPE), which serves as precursor for N-acylethanolamines (NAEs). Exhibits high N-acyltransferase activity and low phospholipase A1/2 activity. Required for complete organelle rupture and degradation that occur during eye lens terminal differentiation, when fiber cells that compose the lens degrade all membrane-bound organelles in order to provide lens with transparency to allow the passage of light. Organelle membrane degradation is probably catalyzed by the phospholipase activity. Plays a role in phospholipid metabolism and adipogenesis. The sequence is that of Phospholipase A and acyltransferase 3 from Pongo abelii (Sumatran orangutan).